Reading from the N-terminus, the 237-residue chain is 2,3,4,5-tetrahydropyridine-2,6-dicarboxylate N-acetyltransferase (237 aa).

The protein belongs to the transferase hexapeptide repeat family. DapH subfamily.

The catalysed reaction is (S)-2,3,4,5-tetrahydrodipicolinate + acetyl-CoA + H2O = L-2-acetamido-6-oxoheptanedioate + CoA. It participates in amino-acid biosynthesis; L-lysine biosynthesis via DAP pathway; LL-2,6-diaminopimelate from (S)-tetrahydrodipicolinate (acetylase route): step 1/3. Catalyzes the transfer of an acetyl group from acetyl-CoA to tetrahydrodipicolinate. In Limosilactobacillus fermentum (strain NBRC 3956 / LMG 18251) (Lactobacillus fermentum), this protein is 2,3,4,5-tetrahydropyridine-2,6-dicarboxylate N-acetyltransferase.